The chain runs to 273 residues: Testis-specific serine/threonine-protein kinase 6 (273 aa).

The Protein kinase domain occupies 12–267 (YKLGRTIGEG…AGQVARNCWL (256 aa)). ATP-binding positions include 18 to 26 (IGEGSYSKV) and K41. The active-site Proton acceptor is D135.

It belongs to the protein kinase superfamily. CAMK Ser/Thr protein kinase family. In terms of assembly, microtubule inner protein component of sperm flagellar doublet microtubules. Interacts with HSP90; this interaction stabilizes and activates TSSK6. Interacts with the heat shock proteins HSPCB, HSPA8 and HSPA1A. These interactions appear to be required for TSSK6 kinase activity. Interacts with TSACC; this interaction is direct and recruits TSACC to HSP90, which is essential for kinase activity. It depends on Mg(2+) as a cofactor. In terms of processing, autophosphorylated. Post-translationally, ubiquitinated; HSP90 activity negatively regulates ubiquitination and degradation. In terms of tissue distribution, highly expressed in testis. Expressed at lower levels in colon, small intestine, ovary, prostate, thymus, spleen and peripheral blood leukocytes.

It localises to the cytoplasm. Its subcellular location is the cytoskeleton. It is found in the flagellum axoneme. The protein resides in the nucleus. It carries out the reaction L-seryl-[protein] + ATP = O-phospho-L-seryl-[protein] + ADP + H(+). The enzyme catalyses L-threonyl-[protein] + ATP = O-phospho-L-threonyl-[protein] + ADP + H(+). Its function is as follows. Serine/threonine-protein kinase component of the sperm flagellar doublet microtubules. May act as a regulator of sperm motility by mediating phosphorylation of sperm doublet microtubule proteins. Plays a role in DNA condensation during postmeiotic chromatin remodeling and histone-to-protamine transition during spermatogenesis. The chain is Testis-specific serine/threonine-protein kinase 6 from Homo sapiens (Human).